The primary structure comprises 822 residues: AP-1 complex subunit gamma-1 (822 aa).

Residues 593–604 (NGPSEIVQTNGE) show a composition bias toward polar residues. The segment at 593–627 (NGPSEIVQTNGETEPAPLETKPPPSGPQPTSQAND) is disordered. A GAE domain is found at 702–817 (PGIPSITAYS…QDLAEVNNFP (116 aa)).

This sequence belongs to the adaptor complexes large subunit family. In terms of assembly, adaptor protein complex 1 (AP-1) is a heterotetramer composed of two large adaptins (gamma-type subunit AP1G1 and beta-type subunit AP1B1), a medium adaptin (mu-type subunit AP1M1 or AP1M2) and a small adaptin (sigma-type subunit AP1S1 or AP1S2 or AP1S3). Interacts (via GAE domain) with RABEP1. Interacts with EPS15. Interacts with SYNRG/gamma-synergin. Interacts (via GAE domain) with AP1AR (via coiled-coil domain). Interacts with CLN3 (via dileucine motif); this interaction facilitates lysosomal targeting. Interacts (via GAE domain) with AFTPH/aftiphilin; the interaction is required to recruit AFTPH/aftiphilin to the perinuclear region of the cell. In terms of tissue distribution, widely expressed.

Its subcellular location is the golgi apparatus. The protein localises to the cytoplasmic vesicle. It localises to the clathrin-coated vesicle membrane. The protein resides in the cytoplasm. It is found in the perinuclear region. Its subcellular location is the clathrin-coated vesicle. The protein localises to the membrane. It localises to the clathrin-coated pit. Functionally, subunit of clathrin-associated adaptor protein complex 1 that plays a role in protein sorting in the late-Golgi/trans-Golgi network (TGN) and/or endosomes. The AP complexes mediate both the recruitment of clathrin to membranes and the recognition of sorting signals within the cytosolic tails of transmembrane cargo molecules. In association with AFTPH/aftiphilin in the aftiphilin/p200/gamma-synergin complex, involved in the trafficking of transferrin from early to recycling endosomes, and the membrane trafficking of furin and the lysosomal enzyme cathepsin D between the trans-Golgi network (TGN) and endosomes. This is AP-1 complex subunit gamma-1 (Ap1g1) from Mus musculus (Mouse).